The chain runs to 368 residues: Probable leucine aminopeptidase ARB_03492 (368 aa).

The N-terminal stretch at 1–18 (MKVSAIAAVAALAAVAVA) is a signal peptide. Residue N92 is glycosylated (N-linked (GlcNAc...) asparagine). H172 and D191 together coordinate Zn(2+). 2 N-linked (GlcNAc...) asparagine glycosylation sites follow: N192 and N216. Zn(2+) is bound by residues E230 and D257. Residues C301 and C305 are joined by a disulfide bond. H334 contributes to the Zn(2+) binding site.

Belongs to the peptidase M28 family. M28E subfamily. As to quaternary structure, monomer. The cofactor is Zn(2+).

It localises to the secreted. Probable extracellular aminopeptidase which contributes to pathogenicity. The protein is Probable leucine aminopeptidase ARB_03492 of Arthroderma benhamiae (strain ATCC MYA-4681 / CBS 112371) (Trichophyton mentagrophytes).